The primary structure comprises 426 residues: Enolase (426 aa).

Gln163 is a (2R)-2-phosphoglycerate binding site. Residue Glu205 is the Proton donor of the active site. Residues Asp242, Glu286, and Asp313 each coordinate Mg(2+). Residues Lys338, Arg367, Ser368, and Lys389 each contribute to the (2R)-2-phosphoglycerate site. Lys338 (proton acceptor) is an active-site residue.

It belongs to the enolase family. The cofactor is Mg(2+).

It localises to the cytoplasm. The protein resides in the secreted. Its subcellular location is the cell surface. It carries out the reaction (2R)-2-phosphoglycerate = phosphoenolpyruvate + H2O. It functions in the pathway carbohydrate degradation; glycolysis; pyruvate from D-glyceraldehyde 3-phosphate: step 4/5. Functionally, catalyzes the reversible conversion of 2-phosphoglycerate (2-PG) into phosphoenolpyruvate (PEP). It is essential for the degradation of carbohydrates via glycolysis. The chain is Enolase from Gemmatimonas aurantiaca (strain DSM 14586 / JCM 11422 / NBRC 100505 / T-27).